Here is a 223-residue protein sequence, read N- to C-terminus: DNA mismatch repair protein MutH (223 aa).

The protein belongs to the MutH family.

It is found in the cytoplasm. Its function is as follows. Sequence-specific endonuclease that cleaves unmethylated GATC sequences. It is involved in DNA mismatch repair. This is DNA mismatch repair protein MutH from Haemophilus influenzae (strain PittEE).